The following is a 2051-amino-acid chain: Autophagy-related protein 2 (2051 aa).

The Chorein N-terminal domain occupies 31–121 (QALDLDNLNF…QDEQTAKNKK (91 aa)). Residues 108–117 (SKQEQDEQTA) show a composition bias toward basic and acidic residues. 6 disordered regions span residues 108-129 (SKQEQDEQTAKNKKGTHKDGDE), 152-179 (RRLEKALAEEAQEALSESMSDSETDDDG), 297-331 (SLVKPQGPAPHDVPSTLRDMSGSMQSSVGGLDMSI), 363-384 (DTQYPEAEENVAGSSPLSTPRA), 419-466 (RSEP…ADTE), and 501-564 (PGGW…DTST). 2 stretches are compositionally biased toward polar residues: residues 374-383 (AGSSPLSTPR) and 426-435 (PPTSFQPQTM). Low complexity predominate over residues 436–454 (PSGAVSPAPSEPSSSASSV).

This sequence belongs to the ATG2 family.

It localises to the preautophagosomal structure membrane. It is found in the endoplasmic reticulum membrane. It carries out the reaction a 1,2-diacyl-sn-glycero-3-phosphocholine(in) = a 1,2-diacyl-sn-glycero-3-phosphocholine(out). The catalysed reaction is a 1,2-diacyl-sn-glycero-3-phospho-L-serine(in) = a 1,2-diacyl-sn-glycero-3-phospho-L-serine(out). It catalyses the reaction a 1,2-diacyl-sn-glycero-3-phosphoethanolamine(in) = a 1,2-diacyl-sn-glycero-3-phosphoethanolamine(out). Functionally, lipid transfer protein required for autophagosome completion and peroxisome degradation. Tethers the edge of the isolation membrane (IM) to the endoplasmic reticulum (ER) and mediates direct lipid transfer from ER to IM for IM expansion. Atg-2 binds to the ER exit site (ERES), which is the membrane source for autophagosome formation, using basic residues in its N-terminal region (NR) and to the expanding edge of the IM through its C-terminal region. The latter binding is assisted by an atg-18-PtdIns3P interaction. Atg-2 then extracts phospholipids from the membrane source using its NR and transfers them to atg-9 to the IM through its predicted beta-sheet-rich structure for membrane expansion. The protein is Autophagy-related protein 2 (apg-2) of Neurospora crassa (strain ATCC 24698 / 74-OR23-1A / CBS 708.71 / DSM 1257 / FGSC 987).